The chain runs to 156 residues: Transcriptional repressor NrdR (156 aa).

A zinc finger spans residues 3–34 (CPYCGHLEDRVVDSRETQDGQATRRRRACLSC). Residues 49–139 (PQVVKKDGRR…VYRAFRDVGE (91 aa)) form the ATP-cone domain.

The protein belongs to the NrdR family. Zn(2+) is required as a cofactor.

Negatively regulates transcription of bacterial ribonucleotide reductase nrd genes and operons by binding to NrdR-boxes. The polypeptide is Transcriptional repressor NrdR (Anaeromyxobacter dehalogenans (strain 2CP-C)).